The primary structure comprises 287 residues: 4-hydroxybenzoate octaprenyltransferase (287 aa).

5 helical membrane passes run 35–55, 96–116, 211–231, 235–255, and 262–282; these read FAAGGLPDLKVFIIFVIGVVV, LFGVMGLFAFSLVLMLNPLVV, IIAAFQLAALSCFIIAGMLAG, IYGLGILAFIGFAVYQQKLIY, and CFTAFLNNNWAGMVLYIALTL.

The protein belongs to the UbiA prenyltransferase family. Mg(2+) serves as cofactor.

It localises to the cell inner membrane. It catalyses the reaction all-trans-octaprenyl diphosphate + 4-hydroxybenzoate = 4-hydroxy-3-(all-trans-octaprenyl)benzoate + diphosphate. Its pathway is cofactor biosynthesis; ubiquinone biosynthesis. Functionally, catalyzes the prenylation of para-hydroxybenzoate (PHB) with an all-trans polyprenyl group. Mediates the second step in the final reaction sequence of ubiquinone-8 (UQ-8) biosynthesis, which is the condensation of the polyisoprenoid side chain with PHB, generating the first membrane-bound Q intermediate 3-octaprenyl-4-hydroxybenzoate. This chain is 4-hydroxybenzoate octaprenyltransferase, found in Shewanella halifaxensis (strain HAW-EB4).